Here is a 643-residue protein sequence, read N- to C-terminus: uncharacterized protein (643 aa).

Positions 561–643 (LNQELETSSE…GADRKKRGVY (83 aa)) are disordered. Residues 591–606 (SRGGRGGRGARGGNRG) show a composition bias toward gly residues. The span at 617 to 635 (GHDRQMKEKHKSDIKQRGA) shows a compositional bias: basic and acidic residues.

This is an uncharacterized protein from Caenorhabditis elegans.